Here is a 362-residue protein sequence, read N- to C-terminus: Cobalt-precorrin-5B C(1)-methyltransferase (362 aa).

The protein belongs to the CbiD family.

It carries out the reaction Co-precorrin-5B + S-adenosyl-L-methionine = Co-precorrin-6A + S-adenosyl-L-homocysteine. It participates in cofactor biosynthesis; adenosylcobalamin biosynthesis; cob(II)yrinate a,c-diamide from sirohydrochlorin (anaerobic route): step 6/10. Catalyzes the methylation of C-1 in cobalt-precorrin-5B to form cobalt-precorrin-6A. The protein is Cobalt-precorrin-5B C(1)-methyltransferase of Burkholderia lata (strain ATCC 17760 / DSM 23089 / LMG 22485 / NCIMB 9086 / R18194 / 383).